Reading from the N-terminus, the 321-residue chain is Mas-related G-protein coupled receptor member D (321 aa).

Topologically, residues 1–33 are extracellular; it reads MNQTLNSSGTVESALNYSRGSTVHTAYLVLSSL. Asn2, Asn6, and Asn16 each carry an N-linked (GlcNAc...) asparagine glycan. Residues 34–54 traverse the membrane as a helical segment; the sequence is AMFTCLCGMAGNSMVIWLLGF. Over 55–59 the chain is Cytoplasmic; that stretch reads RMHRN. A helical membrane pass occupies residues 60 to 80; it reads PFCIYILNLAAADLLFLFSMA. At 81-112 the chain is on the extracellular side; sequence STLSLETQPLVNTTDKVHELMKRLMYFAYTVG. A glycan (N-linked (GlcNAc...) asparagine) is linked at Asn92. The helical transmembrane segment at 113–133 threads the bilayer; it reads LSLLTAISTQRCLSVLFPIWF. Residues 134 to 142 lie on the Cytoplasmic side of the membrane; sequence KCHRPRHLS. Residues 143–163 form a helical membrane-spanning segment; sequence AWVCGLLWTLCLLMNGLTSSF. The Extracellular segment spans residues 164–184; sequence CSKFLKFNEDRCFRVDMVQAA. The chain crosses the membrane as a helical span at residues 185 to 205; the sequence is LIMGVLTPVMTLSSLTLFVWV. The Cytoplasmic portion of the chain corresponds to 206 to 218; sequence RRSSQQWRRQPTR. A helical transmembrane segment spans residues 219–239; the sequence is LFVVVLASVLVFLICSLPLSI. At 240 to 257 the chain is on the extracellular side; that stretch reads YWFVLYWLSLPPEMQVLC. A helical transmembrane segment spans residues 258–280; sequence FSLSRLSSSVSSSANPVIYFLVG. Topologically, residues 281–321 are cytoplasmic; that stretch reads SRRSHRLPTRSLGTVLQQALREEPELEGGETPTVGTNEMGA. Residues 302-321 form a disordered region; sequence EEPELEGGETPTVGTNEMGA.

It belongs to the G-protein coupled receptor 1 family. Mas subfamily.

It localises to the cell membrane. Its function is as follows. May regulate nociceptor function and/or development, including the sensation or modulation of pain. Functions as a specific membrane receptor for beta-alanine. Beta-alanine at micromolar doses specifically evoked Ca(2+) influx in cells expressing the receptor. Beta-alanine decreases forskolin-stimulated cAMP production in cells expressing the receptor, suggesting that the receptor couples with G-protein G(q) and G(i). In Homo sapiens (Human), this protein is Mas-related G-protein coupled receptor member D (MRGPRD).